Reading from the N-terminus, the 450-residue chain is Tubulin alpha-1 chain (450 aa).

Q11 lines the GTP pocket. K40 carries the N6-acetyllysine modification. GTP-binding residues include E71, S140, G144, T145, T179, N206, and N228. Mg(2+) is bound at residue E71. The active site involves E254.

Belongs to the tubulin family. As to quaternary structure, dimer of alpha and beta chains. A typical microtubule is a hollow water-filled tube with an outer diameter of 25 nm and an inner diameter of 15 nM. Alpha-beta heterodimers associate head-to-tail to form protofilaments running lengthwise along the microtubule wall with the beta-tubulin subunit facing the microtubule plus end conferring a structural polarity. Microtubules usually have 13 protofilaments but different protofilament numbers can be found in some organisms and specialized cells. Interacts with Ote. Mg(2+) serves as cofactor. Post-translationally, undergoes a tyrosination/detyrosination cycle, the cyclic removal and re-addition of a C-terminal tyrosine residue by the enzymes tubulin tyrosine carboxypeptidase (TTCP) and tubulin tyrosine ligase (TTL), respectively. In terms of processing, acetylation of alpha chains at Lys-40 stabilizes microtubules and affects affinity and processivity of microtubule motors. This modification has a role in multiple cellular functions, ranging from cell motility, cell cycle progression or cell differentiation to intracellular trafficking and signaling. During the early stages of oogenesis lky/Alpha-tubulin N-acetyltransferase 2 is the main acetyltransferase responsible for Lys-40 acetylation in germline cells while Atat/alpha-tubulin N-acetyltransferase 1 is the main acetyltransferase responsible for Lys-40 acetylation in somatic cells.

The protein localises to the cytoplasm. Its subcellular location is the cytoskeleton. The catalysed reaction is GTP + H2O = GDP + phosphate + H(+). Tubulin is the major constituent of microtubules, a cylinder consisting of laterally associated linear protofilaments composed of alpha- and beta-tubulin heterodimers. Microtubules grow by the addition of GTP-tubulin dimers to the microtubule end, where a stabilizing cap forms. Below the cap, tubulin dimers are in GDP-bound state, owing to GTPase activity of alpha-tubulin. In Drosophila melanogaster (Fruit fly), this protein is Tubulin alpha-1 chain (alphaTub84B).